The following is an 84-amino-acid chain: Apovitellenin-1 (84 aa).

It belongs to the apovitellenin family. As to quaternary structure, monomer.

In terms of biological role, protein component of the very low density lipoprotein (VLDL) of egg-laying females. Potent lipoprotein lipase inhibitor, preventing the loss of triglycerides from VLDL on their way from the liver to the growing oocytes. In Dromaius novaehollandiae (Emu), this protein is Apovitellenin-1.